The following is a 637-amino-acid chain: 1-deoxy-D-xylulose-5-phosphate synthase (637 aa).

Thiamine diphosphate-binding positions include His76 and 117 to 119 (GHS). Asp148 provides a ligand contact to Mg(2+). Thiamine diphosphate is bound by residues 149-150 (GA), Asn177, Tyr294, and Glu381. Residue Asn177 participates in Mg(2+) binding.

The protein belongs to the transketolase family. DXPS subfamily. Homodimer. The cofactor is Mg(2+). It depends on thiamine diphosphate as a cofactor.

The catalysed reaction is D-glyceraldehyde 3-phosphate + pyruvate + H(+) = 1-deoxy-D-xylulose 5-phosphate + CO2. It participates in metabolic intermediate biosynthesis; 1-deoxy-D-xylulose 5-phosphate biosynthesis; 1-deoxy-D-xylulose 5-phosphate from D-glyceraldehyde 3-phosphate and pyruvate: step 1/1. In terms of biological role, catalyzes the acyloin condensation reaction between C atoms 2 and 3 of pyruvate and glyceraldehyde 3-phosphate to yield 1-deoxy-D-xylulose-5-phosphate (DXP). This is 1-deoxy-D-xylulose-5-phosphate synthase from Neisseria gonorrhoeae (strain ATCC 700825 / FA 1090).